The primary structure comprises 600 residues: NADH-quinone oxidoreductase subunit C/D (600 aa).

The segment at 1 to 190 (MVNNMTDLTA…DPFELTKAKQ (190 aa)) is NADH dehydrogenase I subunit C. Residues 214 to 600 (DFMFLNLGPN…IDFVMSDVDR (387 aa)) are NADH dehydrogenase I subunit D.

The protein in the N-terminal section; belongs to the complex I 30 kDa subunit family. In the C-terminal section; belongs to the complex I 49 kDa subunit family. As to quaternary structure, NDH-1 is composed of 13 different subunits. Subunits NuoB, CD, E, F, and G constitute the peripheral sector of the complex.

Its subcellular location is the cell inner membrane. The catalysed reaction is a quinone + NADH + 5 H(+)(in) = a quinol + NAD(+) + 4 H(+)(out). NDH-1 shuttles electrons from NADH, via FMN and iron-sulfur (Fe-S) centers, to quinones in the respiratory chain. The immediate electron acceptor for the enzyme in this species is believed to be ubiquinone. Couples the redox reaction to proton translocation (for every two electrons transferred, four hydrogen ions are translocated across the cytoplasmic membrane), and thus conserves the redox energy in a proton gradient. The polypeptide is NADH-quinone oxidoreductase subunit C/D (Salmonella paratyphi C (strain RKS4594)).